Here is a 183-residue protein sequence, read N- to C-terminus: Small ribosomal subunit protein uS4 (183 aa).

The region spanning 106-168 (RRLQTQVYRQ…AGSPLAREGH (63 aa)) is the S4 RNA-binding domain.

It belongs to the universal ribosomal protein uS4 family. In terms of assembly, part of the 30S ribosomal subunit. Contacts protein S5. The interaction surface between S4 and S5 is involved in control of translational fidelity.

In terms of biological role, one of the primary rRNA binding proteins, it binds directly to 16S rRNA where it nucleates assembly of the body of the 30S subunit. With S5 and S12 plays an important role in translational accuracy. In Methanothrix thermoacetophila (strain DSM 6194 / JCM 14653 / NBRC 101360 / PT) (Methanosaeta thermophila), this protein is Small ribosomal subunit protein uS4.